Consider the following 37-residue polypeptide: Photosystem I reaction center subunit VIII (37 aa).

A helical membrane pass occupies residues 7–27; that stretch reads LPSFFVPLVGLVFPAIAMASL.

The protein belongs to the PsaI family.

It is found in the plastid. The protein localises to the chloroplast thylakoid membrane. Its function is as follows. May help in the organization of the PsaL subunit. This Eucalyptus globulus subsp. globulus (Tasmanian blue gum) protein is Photosystem I reaction center subunit VIII.